A 218-amino-acid polypeptide reads, in one-letter code: MGQKVNPVGLRIGIIRDWDSRWYAEKDYADLLHEDLKIREYINKRLQDAAVSRIEIERAANRVNITIHTAKPGMVIGKGGSEVEALRKALTQLTGKRVHINIVEIKKPDLDAKLVAENIARQLENRVSFRRAQKQAIQRAMRAGAKGIKTMVSGRLGGADIARSEHYSEGTVPLHTLRADIDYATAEADTTYGKLGVKVWIYRGEVLPTKKKTEEGGK.

Residues 38–106 (IREYINKRLQ…RVHINIVEIK (69 aa)) enclose the KH type-2 domain.

The protein belongs to the universal ribosomal protein uS3 family. As to quaternary structure, part of the 30S ribosomal subunit. Forms a tight complex with proteins S10 and S14.

In terms of biological role, binds the lower part of the 30S subunit head. Binds mRNA in the 70S ribosome, positioning it for translation. This is Small ribosomal subunit protein uS3 from Geobacillus sp. (strain WCH70).